Consider the following 508-residue polypeptide: Prenylcysteine oxidase 1 (508 aa).

A signal peptide spans 1-31 (MDPAAPGLACSILRLGLGLLLLCSWWYPGSA). 3 N-linked (GlcNAc...) asparagine glycosylation sites follow: N199, N291, and N356.

It belongs to the prenylcysteine oxidase family. It depends on FAD as a cofactor.

Its subcellular location is the lysosome. The enzyme catalyses an S-polyprenyl-L-cysteine + O2 + H2O = a polyprenal + L-cysteine + H2O2. It carries out the reaction S-(2E,6E)-farnesyl-L-cysteine + O2 + H2O = (2E,6E)-farnesal + L-cysteine + H2O2. The catalysed reaction is [(2E,6E,10E)-geranylgeranyl]-L-cysteine + O2 + H2O = (2E,6E,10E)-geranylgeranial + L-cysteine + H2O2. Its function is as follows. Prenylcysteine oxidase that cleaves the thioether bond of prenyl-L-cysteines, such as farnesylcysteine and geranylgeranylcysteine. Only active against free prenylcysteines and not prenylcysteine residues within prenylated proteins or peptides. Involved in the final step in the degradation of prenylated proteins, by degrading prenylcysteines after the protein has been degraded. In Bos taurus (Bovine), this protein is Prenylcysteine oxidase 1.